Here is a 273-residue protein sequence, read N- to C-terminus: Type II pantothenate kinase (273 aa).

8–15 (DAGGTLTK) is a binding site for ATP. Residue Glu76 is the Proton acceptor of the active site. ATP is bound by residues Thr105, 127 to 131 (GGTIM), Phe143, and Ser230.

Belongs to the type II pantothenate kinase family. Homodimer.

The protein localises to the cytoplasm. It catalyses the reaction (R)-pantothenate + ATP = (R)-4'-phosphopantothenate + ADP + H(+). It participates in cofactor biosynthesis; coenzyme A biosynthesis; CoA from (R)-pantothenate: step 1/5. Catalyzes the phosphorylation of pantothenate (Pan), the first step in CoA biosynthesis. This chain is Type II pantothenate kinase, found in Bacillus cereus (strain G9842).